Here is a 365-residue protein sequence, read N- to C-terminus: 3-dehydroquinate synthase (365 aa).

Residues 75-80, 109-113, 133-134, Lys-146, and Lys-155 each bind NAD(+); these read DAESGK, GAATD, and TT. Zn(2+) is bound by residues Glu-188, His-253, and His-269.

The protein belongs to the sugar phosphate cyclases superfamily. Dehydroquinate synthase family. Requires NAD(+) as cofactor. It depends on Co(2+) as a cofactor. The cofactor is Zn(2+).

Its subcellular location is the cytoplasm. The catalysed reaction is 7-phospho-2-dehydro-3-deoxy-D-arabino-heptonate = 3-dehydroquinate + phosphate. It participates in metabolic intermediate biosynthesis; chorismate biosynthesis; chorismate from D-erythrose 4-phosphate and phosphoenolpyruvate: step 2/7. Catalyzes the conversion of 3-deoxy-D-arabino-heptulosonate 7-phosphate (DAHP) to dehydroquinate (DHQ). The sequence is that of 3-dehydroquinate synthase from Corynebacterium efficiens (strain DSM 44549 / YS-314 / AJ 12310 / JCM 11189 / NBRC 100395).